The chain runs to 180 residues: Superoxide dismutase [Cu-Zn] (180 aa).

Positions 1-19 are cleaved as a signal peptide; sequence MFMNLLSQVSNAIFPQVEA. His-68, His-70, and His-85 together coordinate Cu cation. Cys-79 and Cys-171 form a disulfide bridge. Zn(2+) is bound by residues His-85, His-93, His-102, and Asp-105. Residue His-142 coordinates Cu cation.

It belongs to the Cu-Zn superoxide dismutase family. As to quaternary structure, homodimer. It depends on Cu cation as a cofactor. Zn(2+) serves as cofactor.

It is found in the cytoplasm. The enzyme catalyses 2 superoxide + 2 H(+) = H2O2 + O2. Destroys radicals which are normally produced within the cells and which are toxic to biological systems. Required for normal brood size. May be involved in regulating mpk-1 phosphorylation downstream of phosphatase ptp-2 during oocyte maturation. The protein is Superoxide dismutase [Cu-Zn] of Caenorhabditis briggsae.